Reading from the N-terminus, the 297-residue chain is UDP-N-acetylenolpyruvoylglucosamine reductase (297 aa).

In terms of domain architecture, FAD-binding PCMH-type spans 26 to 191 (KSGGTADWLF…VAARFRGHPG (166 aa)). The active site involves arginine 171. Serine 220 serves as the catalytic Proton donor. Glutamate 290 is a catalytic residue.

Belongs to the MurB family. The cofactor is FAD.

It is found in the cytoplasm. The catalysed reaction is UDP-N-acetyl-alpha-D-muramate + NADP(+) = UDP-N-acetyl-3-O-(1-carboxyvinyl)-alpha-D-glucosamine + NADPH + H(+). The protein operates within cell wall biogenesis; peptidoglycan biosynthesis. Its function is as follows. Cell wall formation. In Novosphingobium aromaticivorans (strain ATCC 700278 / DSM 12444 / CCUG 56034 / CIP 105152 / NBRC 16084 / F199), this protein is UDP-N-acetylenolpyruvoylglucosamine reductase.